The following is a 267-amino-acid chain: Tryptophan synthase alpha chain (267 aa).

Catalysis depends on proton acceptor residues glutamate 49 and aspartate 60.

The protein belongs to the TrpA family. Tetramer of two alpha and two beta chains.

It catalyses the reaction (1S,2R)-1-C-(indol-3-yl)glycerol 3-phosphate + L-serine = D-glyceraldehyde 3-phosphate + L-tryptophan + H2O. The protein operates within amino-acid biosynthesis; L-tryptophan biosynthesis; L-tryptophan from chorismate: step 5/5. In terms of biological role, the alpha subunit is responsible for the aldol cleavage of indoleglycerol phosphate to indole and glyceraldehyde 3-phosphate. The polypeptide is Tryptophan synthase alpha chain (Acaryochloris marina (strain MBIC 11017)).